A 187-amino-acid chain; its full sequence is Casparian strip membrane protein 1 (187 aa).

The segment covering 1–10 has biased composition (basic and acidic residues); sequence MKGSSEHGET. Positions 1–20 are disordered; the sequence is MKGSSEHGETSKQAPLGSSR. Over 1–27 the chain is Cytoplasmic; the sequence is MKGSSEHGETSKQAPLGSSRGVSKGVS. The chain crosses the membrane as a helical span at residues 28–48; sequence VLDLILRFIAIIGTLASAIAM. The Extracellular portion of the chain corresponds to 49–75; sequence GTTNETLPFFTQFIRFKAQYSDLPTLT. Asn-52 is a glycosylation site (N-linked (GlcNAc...) asparagine). A helical membrane pass occupies residues 76–96; that stretch reads FFVVANSIVCAYLTLSLPLSI. Over 97–115 the chain is Cytoplasmic; it reads VHIIRSRAKYSRLLLVVLD. The chain crosses the membrane as a helical span at residues 116-136; that stretch reads AAMLALVTPGASAAAAIVYLA. At 137 to 162 the chain is on the extracellular side; sequence HKGNVRANWLAICQQFDSFCERISGC. The helical transmembrane segment at 163 to 183 threads the bilayer; sequence LIGSFGAMVMLVLLLLLSAIA. Topologically, residues 184-187 are cytoplasmic; sequence LARR.

Belongs to the Casparian strip membrane proteins (CASP) family. Homodimer and heterodimers.

Its subcellular location is the cell membrane. In terms of biological role, regulates membrane-cell wall junctions and localized cell wall deposition. Required for establishment of the Casparian strip membrane domain (CSD) and the subsequent formation of Casparian strips, a cell wall modification of the root endodermis that determines an apoplastic barrier between the intraorganismal apoplasm and the extraorganismal apoplasm and prevents lateral diffusion. This Zea mays (Maize) protein is Casparian strip membrane protein 1.